The sequence spans 143 residues: Nucleoside diphosphate kinase (143 aa).

Lysine 11, phenylalanine 59, arginine 87, threonine 93, arginine 104, and asparagine 114 together coordinate ATP. Residue histidine 117 is the Pros-phosphohistidine intermediate of the active site.

It belongs to the NDK family. As to quaternary structure, homotetramer. Mg(2+) serves as cofactor.

It localises to the cytoplasm. It carries out the reaction a 2'-deoxyribonucleoside 5'-diphosphate + ATP = a 2'-deoxyribonucleoside 5'-triphosphate + ADP. It catalyses the reaction a ribonucleoside 5'-diphosphate + ATP = a ribonucleoside 5'-triphosphate + ADP. Its function is as follows. Major role in the synthesis of nucleoside triphosphates other than ATP. The ATP gamma phosphate is transferred to the NDP beta phosphate via a ping-pong mechanism, using a phosphorylated active-site intermediate. This chain is Nucleoside diphosphate kinase, found in Shewanella woodyi (strain ATCC 51908 / MS32).